The sequence spans 271 residues: MRFTEQLAAAWQRNNSLLCVGLDPDPARLPASLTTSGGAIFSFCRAIVDATADLVCAFKPQIAYFASQRAEDQLEQLIAYIHEAYPGIPVILDAKRGDIGSTAEHYAKEAFERYQADAVTVSPYMGFDSMQPYLVHPDKGVIVLCRTSNAGGSDVQFLETNGRPVYQVVAERARDAWNTSGQMGLVVGATFPQEIRRVREIVGDMPLLIPGIGVQGGDIEATVRAGRTADGTGMMINSSRAILYASSDSDFADAARGVAQATRDQINQYRN.

The Proton donor role is filled by lysine 95.

Belongs to the OMP decarboxylase family. Type 2 subfamily.

The catalysed reaction is orotidine 5'-phosphate + H(+) = UMP + CO2. It participates in pyrimidine metabolism; UMP biosynthesis via de novo pathway; UMP from orotate: step 2/2. This chain is Orotidine 5'-phosphate decarboxylase (pyrF), found in Ralstonia nicotianae (strain ATCC BAA-1114 / GMI1000) (Ralstonia solanacearum).